Consider the following 3916-residue polypeptide: Fusarin C synthetase (3916 aa).

A Ketosynthase family 3 (KS3) domain is found at 9-440 (KEPIAIIGTS…GTNVHAIIEQ (432 aa)). Residues cysteine 182, histidine 319, and histidine 360 each act as for beta-ketoacyl synthase activity in the active site. A malonyl-CoA:ACP transacylase (MAT) domain region spans residues 548 to 869 (VFTGQGAQWP…VTRNIHDVEA (322 aa)). The N-terminal hotdog fold stretch occupies residues 935 to 1068 (HPLLGARSVE…GQLRVEFSSL (134 aa)). Residues 935–1228 (HPLLGARSVE…GLTCTSLLRP (294 aa)) form a dehydratase (DH) domain region. Positions 935-1231 (HPLLGARSVE…CTSLLRPGPS (297 aa)) constitute a PKS/mFAS DH domain. Residue histidine 967 is the Proton acceptor; for dehydratase activity of the active site. Positions 1084–1231 (LTSVDMERFY…CTSLLRPGPS (148 aa)) are C-terminal hotdog fold. Residue aspartate 1141 is the Proton donor; for dehydratase activity of the active site. Residues 1350–1584 (VGENLPAVVR…YMTSVMLSQA (235 aa)) are C-methyltransferase (CMeT) domain. The tract at residues 2092–2266 (TYLLIGFTGG…AASVMHIGMV (175 aa)) is ketoreductase (KR) domain 1. One can recognise a Carrier 1 domain in the interval 2372–2449 (EILAVVEEEF…ELCSTVVSHL (78 aa)). Position 2409 is an O-(pantetheine 4'-phosphoryl)serine (serine 2409). The disordered stretch occupies residues 2482-2511 (ASPTENEPFTIRNSPNSTQVTSESGVDEET). Polar residues predominate over residues 2486 to 2505 (ENEPFTIRNSPNSTQVTSES). The interval 2522-2806 (PLSFAQERLW…VNLLPLRLKL (285 aa)) is condensation. Residues 2973 to 3385 (FEKCVVNQPD…RIAGDSQIKL (413 aa)) are adenylation. Residues 3493 to 3570 (KPLTETQERL…EMAAKIDGFT (78 aa)) form the Carrier 2 domain. Serine 3530 carries the O-(pantetheine 4'-phosphoryl)serine modification. Residues 3612–3833 (LTGATGFLGV…DFVPVDVVAA (222 aa)) form a thiolester reductase (R) domain region.

It in the C-terminal section; belongs to the NRP synthetase family.

It functions in the pathway mycotoxin biosynthesis. Functionally, fusarin C synthetase; part of the gene cluster that mediates the biosynthesis of the mycotoxin fusarin C. Within the cluster, FUS1, FUS2, FUS8 and FUS9 are sufficient for fusarin production. The roles of the other FUS members are yet undetermined. The fusarin C synthetase FUS1 is responsible for the condensation of one acetyl-coenzyme A (CoA) unit with six malonyl-CoA units and the amide linkage of the arising heptaketide and homoserine, subsequently releasing the first intermediate, prefusarin, as an alcohol with an open ring structure. The cytochrome P450 monooxygenase FUS8 participates in multiple oxidation processes at carbon C-20 and is able to use the FUS1 product as substrate, resulting in formation of 20-hydroxy-prefusarin. This reaction seems to be essential before the 2-pyrrolidone ring closure can be catalyzed by FUS2, generating 20-hydroxy-fusarin. FUS8 is able to further oxidizes carbon C-20 after ring closure, resulting in the formation of carboxy-fusarin C. As the last step, FUS9 methylates the hydroxyl group at C-21 to generate fusarin C. Fusarin C can then rearrange to epi-fusarin C, the (z)-isomers, and fusarin A and fusarin D. The protein is Fusarin C synthetase of Gibberella moniliformis (strain M3125 / FGSC 7600) (Maize ear and stalk rot fungus).